A 367-amino-acid polypeptide reads, in one-letter code: F-box only protein 25 (367 aa).

An interaction with beta-actin region spans residues 1-83 (MPFLGQDWRS…NDTNTQSFYR (83 aa)). An F-box domain is found at 226-274 (LTLSDLPLHMLNNILYRFSDGWDIITLGQVTPTLYMLSEDRQLWKKLCQ).

As to quaternary structure, part of a SCF (SKP1-cullin-F-box) protein ligase complex consisting of FBXO25, SKP1, CUL1 and RBX1. Interacts directly with SKP1 and CUL1. Interacts (via C-terminus) with beta-actin (via N-terminus). Expressed in all brain tissue observed.

It is found in the nucleus. It participates in protein modification; protein ubiquitination. Functionally, substrate-recognition component of the SCF (SKP1-CUL1-F-box protein)-type E3 ubiquitin ligase complex. May play a role in accumulation of expanded polyglutamine (polyQ) protein huntingtin (HTT). The chain is F-box only protein 25 (FBXO25) from Homo sapiens (Human).